A 399-amino-acid polypeptide reads, in one-letter code: MASSFNEETAKKLLTQVEFYFSDSNLPTDGFLNREVTKSKDGLVSLPLVCSFSRMRNLLGLGNINREDIPPRIVEEVANLLRTSDFLKVSNNGQRIGRGTKLSKPEEVLEQVHRRTLAASPFEYSIKMEDVSSFFSQYAKVNSVRLPPNIADKRRFCGTALVEFSSEQDTQDILRQSLVYAGADLVLIPKSDFDCQRENMIKQLGKSESHNEFRRGQIVKFALKWIASEEKVTNKEKPSALKNKIKEKEDKETGIADREKENGDNSCASLCKDNTDQLVVPPWNNSNSVSSEVLKDLFQRFGSVEHIEYSGGLDSGYVWFTDSETAMKARAAVEFVGGLVVKNNFSVALEAINGEMERELWKRLSSAELEGGKEGHKKEKGKDECFENVQPTKKARKEP.

The 104-residue stretch at 3-106 folds into the HTH La-type RNA-binding domain; the sequence is SSFNEETAKK…GRGTKLSKPE (104 aa). The region spanning 115–192 is the RRM domain; that stretch reads RTLAASPFEY…ADLVLIPKSD (78 aa). One can recognise a xRRM domain in the interval 269–399; that stretch reads SLCKDNTDQL…QPTKKARKEP (131 aa). The interval 367–399 is disordered; the sequence is AELEGGKEGHKKEKGKDECFENVQPTKKARKEP. Residues 370 to 385 show a composition bias toward basic and acidic residues; the sequence is EGGKEGHKKEKGKDEC.

As to expression, expressed ubiquitously (at protein level).

The protein localises to the nucleus. It localises to the nucleoplasm. It is found in the nucleolus. Binds to the 3' poly(U) terminus of nascent RNA polymerase III transcripts, protecting them from exonuclease digestion and facilitating their folding and maturation. This chain is La protein 2 (LA2), found in Arabidopsis thaliana (Mouse-ear cress).